A 60-amino-acid chain; its full sequence is Large ribosomal subunit protein bL32 (60 aa).

A compositionally biased stretch (basic residues) spans 1–22 (MAVPKKKTSKSRRDMRRSHHAL). The interval 1–27 (MAVPKKKTSKSRRDMRRSHHALKGSAY) is disordered.

It belongs to the bacterial ribosomal protein bL32 family.

The protein is Large ribosomal subunit protein bL32 of Rhodospirillum centenum (strain ATCC 51521 / SW).